The sequence spans 530 residues: Carbohydrate sulfotransferase 2 (530 aa).

The tract at residues M1–A20 is disordered. Residues M1 to K54 lie on the Cytoplasmic side of the membrane. The span at A8–A20 shows a compositional bias: pro residues. The chain crosses the membrane as a helical; Signal-anchor for type II membrane protein span at residues A55 to D75. Topologically, residues Y76–L530 are lumenal. The disordered stretch occupies residues G97–P128. W173 to F179 is a binding site for 3'-phosphoadenylyl sulfate. A glycan (N-linked (GlcNAc...) asparagine) is linked at N243. R332 to S340 is a binding site for 3'-phosphoadenylyl sulfate. Residues N457 and N475 are each glycosylated (N-linked (GlcNAc...) asparagine).

This sequence belongs to the sulfotransferase 1 family. Gal/GlcNAc/GalNAc subfamily. Homodimer; disulfide-linked. Homodimerization is not essential for enzyme activity. As to expression, in brain, it is expressed in pyramidal cells in the CA3 subregion of the hippocampus, cerebellar nucleus and Purkinje cells. Expressed in peripheral lymph nodes.

It is found in the golgi apparatus. The protein resides in the trans-Golgi network membrane. It carries out the reaction 3-O-{N-acetyl-beta-D-glucosaminyl-(1-&gt;3)-beta-D-galactosyl-(1-&gt;3)-N-acetyl-alpha-D-galactosaminyl}-L-threonyl-[protein] + 3'-phosphoadenylyl sulfate = 3-O-{6-O-sulfo-N-acetyl-beta-D-glucosaminyl-(1-&gt;3)-beta-D-galactosyl-(1-&gt;3)-N-acetyl-alpha-D-galactosaminyl}-L-threonyl-[protein] + adenosine 3',5'-bisphosphate + H(+). The enzyme catalyses 3-O-{N-acetyl-beta-D-glucosaminyl-(1-&gt;3)-beta-D-galactosyl-(1-&gt;3)-N-acetyl-alpha-D-galactosaminyl}-L-seryl-[protein] + 3'-phosphoadenylyl sulfate = 3-O-{6-O-sulfo-N-acetyl-beta-D-glucosaminyl-(1-&gt;3)-beta-D-galactosyl-(1-&gt;3)-N-acetyl-alpha-D-galactosaminyl}-L-seryl-[protein] + adenosine 3',5'-bisphosphate + H(+). The catalysed reaction is a 3-O-{beta-D-galactosyl-(1-&gt;3)-[N-acetyl-beta-D-glucosaminyl-(1-&gt;6)]-N-acetyl-alpha-D-galactosaminyl}-L-threonyl-[protein] + 3'-phosphoadenylyl sulfate = 3-O-{beta-D-galactosyl-(1-&gt;3)-[6-O-sulfo-N-acetyl-beta-D-glucosaminyl-(1-&gt;6)]-N-acetyl-alpha-D-galactosaminyl}-L-threonyl-[protein] + adenosine 3',5'-bisphosphate + H(+). It catalyses the reaction 3-O-{beta-D-galactosyl-(1-&gt;3)-[N-acetyl-beta-D-glucosaminyl-(1-&gt;6)]-N-acetyl-alpha-D-galactosaminyl}-L-seryl-[protein] + 3'-phosphoadenylyl sulfate = 3-O-{beta-D-galactosyl-(1-&gt;3)-[6-O-sulfo-N-acetyl-beta-D-glucosaminyl-(1-&gt;6)]-N-acetyl-alpha-D-galactosaminyl}-L-seryl-[protein] + adenosine 3',5'-bisphosphate + H(+). Its pathway is protein modification; carbohydrate sulfation. In terms of biological role, sulfotransferase that utilizes 3'-phospho-5'-adenylyl sulfate (PAPS) as sulfonate donor to catalyze the transfer of sulfate to position 6 of non-reducing N-acetylglucosamine (GlcNAc) residues within keratan-like structures on N-linked glycans and within mucin-associated glycans that can ultimately serve as SELL ligands. SELL ligands are present in high endothelial cells (HEVs) and play a central role in lymphocyte homing at sites of inflammation. Participates in biosynthesis of the SELL ligand sialyl 6-sulfo Lewis X and in lymphocyte homing to Peyer patches. Has no activity toward O-linked sugars. Its substrate specificity may be influenced by its subcellular location. Sulfates GlcNAc residues at terminal, non-reducing ends of oligosaccharide chains. This Mus musculus (Mouse) protein is Carbohydrate sulfotransferase 2 (Chst2).